Here is a 567-residue protein sequence, read N- to C-terminus: UPF0313 protein Tpet_0582 (567 aa).

A Radical SAM core domain is found at 288-560 (KAIETVKFSI…NKMKENVLFK (273 aa)). [4Fe-4S] cluster is bound by residues Cys-303, Cys-307, and Cys-310.

The protein belongs to the UPF0313 family. Requires [4Fe-4S] cluster as cofactor.

This chain is UPF0313 protein Tpet_0582, found in Thermotoga petrophila (strain ATCC BAA-488 / DSM 13995 / JCM 10881 / RKU-1).